A 255-amino-acid polypeptide reads, in one-letter code: Small ribosomal subunit protein uS2 (255 aa).

This sequence belongs to the universal ribosomal protein uS2 family.

In Streptococcus pyogenes serotype M49 (strain NZ131), this protein is Small ribosomal subunit protein uS2.